Here is a 477-residue protein sequence, read N- to C-terminus: Spliceosome-associated protein CWC27 homolog (477 aa).

Residues 11 to 166 enclose the PPIase cyclophilin-type domain; sequence SNGKVLLKTT…NPHKIKCTEV (156 aa). 2 disordered regions span residues 203-355 and 401-477; these read LLSF…AENT and TQAI…KERR. A compositionally biased stretch (acidic residues) spans 208–218; that stretch reads EEAEEDEEEVN. 2 stretches are compositionally biased toward basic and acidic residues: residues 230 to 240 and 247 to 258; these read SSHDLLKDDPR and VEREKDSQSADS. A compositionally biased stretch (acidic residues) spans 259–279; that stretch reads DKDEDEMSDDDDEEEDDEMDS. Composition is skewed to basic and acidic residues over residues 280 to 299, 311 to 353, and 430 to 442; these read DEKH…DPSK, EERK…KEAE, and QFEE…KDAN. Residues 308-381 are a coiled coil; that stretch reads DEAEERKSSR…EEVRKKNTNK (74 aa).

It belongs to the cyclophilin-type PPIase family. Part of the activated spliceosome B/catalytic step 1 spliceosome, one of the forms of the spliceosome which has a well-formed active site but still cannot catalyze the branching reaction and is composed at least of 52 proteins, the U2, U5 and U6 snRNAs and the pre-mRNA. Recruited during early steps of activated spliceosome B maturation, it is probably one of the first proteins released from this complex as he matures to the spliceosome C complex. Component of the minor spliceosome, which splices U12-type introns.

It localises to the nucleus. Functionally, as part of the spliceosome, plays a role in pre-mRNA splicing. Probable inactive PPIase with no peptidyl-prolyl cis-trans isomerase activity. In Xenopus laevis (African clawed frog), this protein is Spliceosome-associated protein CWC27 homolog (cwc27).